The following is an 803-amino-acid chain: Dynein axonemal intermediate chain 4 (803 aa).

Polar residues predominate over residues 1-33 (MPSSPTSTRKQTNFTASVSAQSRKSISFGNPKS). Disordered stretches follow at residues 1–41 (MPSS…GYAG), 88–109 (LYHPDPHAMPTKPSKLLTSQEG), and 143–163 (STVSKSSISTTESMTEDLEDP). Over residues 143-155 (STVSKSSISTTES) the composition is skewed to low complexity. WD repeat units follow at residues 492–532 (QSPY…NTPV), 541–589 (KHLG…DCHD), 616–656 (SRQA…QYLE), 660–700 (GHKG…PFFT), 703–742 (PTTYVVYDVAWSPKSAYIFAAANENRVEIWDLQISTLDPL), and 748–787 (NPGIKFTTVLFAKQTDCLLVGDSDGQVAVYELRNMPTPTE).

As to quaternary structure, part of the multisubunit axonemal dynein complex formed at least of two heavy chains and a number of intermediate and light chains. Associated with axonemal dynein subunits such as, DNAH2, DNAI3, and DYNLT1. Interacts with DYNLT1.

The protein resides in the cytoplasm. It localises to the cytoskeleton. It is found in the flagellum axoneme. Its subcellular location is the cilium axoneme. The protein localises to the dynein axonemal particle. Functionally, plays a critical role in the assembly of axonemal dynein complex, thereby playing a role in ciliary motility. The sequence is that of Dynein axonemal intermediate chain 4 from Rattus norvegicus (Rat).